The sequence spans 642 residues: Threonine--tRNA ligase (642 aa).

In terms of domain architecture, TGS spans 1-61 (MPVITLPDGS…DADATVAIIT (61 aa)). A catalytic region spans residues 243 to 534 (DHRKIGKQLD…LTEEFAGFFP (292 aa)). Residues Cys334, His385, and His511 each coordinate Zn(2+).

The protein belongs to the class-II aminoacyl-tRNA synthetase family. As to quaternary structure, homodimer. Zn(2+) serves as cofactor.

It localises to the cytoplasm. It carries out the reaction tRNA(Thr) + L-threonine + ATP = L-threonyl-tRNA(Thr) + AMP + diphosphate + H(+). Catalyzes the attachment of threonine to tRNA(Thr) in a two-step reaction: L-threonine is first activated by ATP to form Thr-AMP and then transferred to the acceptor end of tRNA(Thr). Also edits incorrectly charged L-seryl-tRNA(Thr). The sequence is that of Threonine--tRNA ligase from Edwardsiella ictaluri (strain 93-146).